The sequence spans 140 residues: Nucleoside diphosphate kinase (140 aa).

Positions 9, 57, 85, 91, 102, and 112 each coordinate ATP. His115 functions as the Pros-phosphohistidine intermediate in the catalytic mechanism.

Belongs to the NDK family. Homotetramer. Requires Mg(2+) as cofactor.

The protein resides in the cytoplasm. The catalysed reaction is a 2'-deoxyribonucleoside 5'-diphosphate + ATP = a 2'-deoxyribonucleoside 5'-triphosphate + ADP. The enzyme catalyses a ribonucleoside 5'-diphosphate + ATP = a ribonucleoside 5'-triphosphate + ADP. Major role in the synthesis of nucleoside triphosphates other than ATP. The ATP gamma phosphate is transferred to the NDP beta phosphate via a ping-pong mechanism, using a phosphorylated active-site intermediate. The sequence is that of Nucleoside diphosphate kinase from Chlorobium limicola (strain DSM 245 / NBRC 103803 / 6330).